A 340-amino-acid polypeptide reads, in one-letter code: Uroporphyrinogen decarboxylase (340 aa).

Residues 21 to 25 (RQAGR), D71, Y148, S203, and H316 each bind substrate.

The protein belongs to the uroporphyrinogen decarboxylase family. Homodimer.

The protein localises to the cytoplasm. It carries out the reaction uroporphyrinogen III + 4 H(+) = coproporphyrinogen III + 4 CO2. Its pathway is porphyrin-containing compound metabolism; protoporphyrin-IX biosynthesis; coproporphyrinogen-III from 5-aminolevulinate: step 4/4. In terms of biological role, catalyzes the decarboxylation of four acetate groups of uroporphyrinogen-III to yield coproporphyrinogen-III. This is Uroporphyrinogen decarboxylase from Campylobacter hominis (strain ATCC BAA-381 / DSM 21671 / CCUG 45161 / LMG 19568 / NCTC 13146 / CH001A).